The sequence spans 319 residues: Transcriptional regulator LsrR (319 aa).

Positions Gln-32–Gln-55 form a DNA-binding region, H-T-H motif.

The protein belongs to the SorC transcriptional regulatory family.

The protein resides in the cytoplasm. With respect to regulation, inactivated by phosphorylated autoinducer-2 (phospho-AI-2). Phospho-AI-2 acts by binding to LsrR, which is then unable to bind to the promoter regions, allowing the transcription of the target genes. Functionally, transcriptional regulator that represses the expression of the lsr operon in the absence of the quorum-sensing signaling molecule autoinducer 2 (AI-2). It also represses the expression of the lsrRK operon. Acts by binding to the intergenic region between the lsr operon and lsrR. In the presence of phosphorylated autoinducer-2 (phospho-AI-2), LsrR is inactivated, leading to the transcription of the genes. This chain is Transcriptional regulator LsrR (lsrR), found in Salmonella choleraesuis (strain SC-B67).